A 120-amino-acid polypeptide reads, in one-letter code: Peptidyl-tRNA hydrolase (120 aa).

It belongs to the PTH2 family. Homodimer.

Its subcellular location is the cytoplasm. It catalyses the reaction an N-acyl-L-alpha-aminoacyl-tRNA + H2O = an N-acyl-L-amino acid + a tRNA + H(+). The natural substrate for this enzyme may be peptidyl-tRNAs which drop off the ribosome during protein synthesis. The sequence is that of Peptidyl-tRNA hydrolase from Saccharolobus solfataricus (strain ATCC 35092 / DSM 1617 / JCM 11322 / P2) (Sulfolobus solfataricus).